Reading from the N-terminus, the 421-residue chain is NADH-quinone oxidoreductase subunit F (421 aa).

Position 54–63 (54–63 (GRGGAGFSTG)) interacts with NAD(+). 166 to 213 (GAGAYICGEETALLESLEGKKGMPRLKPPFPAGFGLYGCPTTINNVES) lines the FMN pocket. Residues Cys344, Cys347, Cys350, and Cys390 each coordinate [4Fe-4S] cluster.

This sequence belongs to the complex I 51 kDa subunit family. It depends on FMN as a cofactor. Requires [4Fe-4S] cluster as cofactor.

The catalysed reaction is a quinone + NADH + 5 H(+)(in) = a quinol + NAD(+) + 4 H(+)(out). In terms of biological role, NDH-1 shuttles electrons from NADH, via FMN and iron-sulfur (Fe-S) centers, to quinones in the respiratory chain. Couples the redox reaction to proton translocation (for every two electrons transferred, four hydrogen ions are translocated across the cytoplasmic membrane), and thus conserves the redox energy in a proton gradient. The polypeptide is NADH-quinone oxidoreductase subunit F (nuoF) (Rickettsia typhi (strain ATCC VR-144 / Wilmington)).